Here is a 142-residue protein sequence, read N- to C-terminus: Hemoglobin subunit alpha (142 aa).

The 141-residue stretch at 2–142 folds into the Globin domain; the sequence is VLSAADKTNV…VSTVLTSKYR (141 aa). Ser-4 carries the post-translational modification Phosphoserine. Lys-8 bears the N6-succinyllysine mark. Thr-9 is modified (phosphothreonine). Lys-12 bears the N6-succinyllysine mark. Lys-17 carries the post-translational modification N6-acetyllysine; alternate. Lys-17 is modified (N6-succinyllysine; alternate). An N6-succinyllysine modification is found at Lys-41. A Phosphoserine modification is found at Ser-50. Residue His-59 participates in O2 binding. His-88 contributes to the heme b binding site. Ser-103 carries the post-translational modification Phosphoserine. Thr-109 carries the post-translational modification Phosphothreonine. Phosphoserine occurs at positions 125 and 132. Residues Thr-135 and Thr-138 each carry the phosphothreonine modification. The residue at position 139 (Ser-139) is a Phosphoserine.

Belongs to the globin family. In terms of assembly, heterotetramer of two alpha chains and two beta chains. Red blood cells.

In terms of biological role, involved in oxygen transport from the lung to the various peripheral tissues. Hemopressin acts as an antagonist peptide of the cannabinoid receptor CNR1. Hemopressin-binding efficiently blocks cannabinoid receptor CNR1 and subsequent signaling. The sequence is that of Hemoglobin subunit alpha (HBA) from Equus przewalskii (Przewalski's horse).